Reading from the N-terminus, the 347-residue chain is Violet-sensitive opsin (347 aa).

Topologically, residues 1–31 are extracellular; the sequence is MLEEEDFYLFKNVSNVSPFDGPQYHIAPKWA. A glycan (N-linked (GlcNAc...) asparagine) is linked at Asn-12. A helical membrane pass occupies residues 32–56; sequence FTLQAIFMGMVFLIGTPLNFIVLLV. At 57-68 the chain is on the cytoplasmic side; sequence TIKYKKLRQPLN. Residues 69 to 94 traverse the membrane as a helical segment; it reads YILVNITVGGFLMCIFSIFPVFVSSS. Residues 95–108 are Extracellular-facing; the sequence is QGYFFFGRIACSID. An intrachain disulfide couples Cys-105 to Cys-182. Residues 109-128 traverse the membrane as a helical segment; that stretch reads AFVGTLTGLVTGWSLAFLAF. Residues 129-147 lie on the Cytoplasmic side of the membrane; that stretch reads ERYIVICKPMGNFNFSSSH. The chain crosses the membrane as a helical span at residues 148–171; sequence ALAVVICTWIIGIVVSVPPFLGWS. The Extracellular segment spans residues 172-197; the sequence is RYMPEGLQCSCGPDWYTVGTKYRSEY. The chain crosses the membrane as a helical span at residues 198 to 225; sequence YTWFIFIFCFVIPLSLICFSYGRLLGAL. Topologically, residues 226 to 247 are cytoplasmic; that stretch reads RAVAAQQQESASTQKAEREVSR. Residues 248-271 form a helical membrane-spanning segment; that stretch reads MVIFMVGSFCLCYVPYAAMAMYMV. The Extracellular segment spans residues 272 to 279; it reads TNRNHGLD. A helical membrane pass occupies residues 280–304; the sequence is LRLVTIPAFFSKSSCVYNPIIYSFM. N6-(retinylidene)lysine is present on Lys-291. Over 305-347 the chain is Cytoplasmic; that stretch reads NKQFRGCIMETVCGRPMSDDSSVSSTSQRTEVSTVSSSQVSPA. The interval 323–347 is disordered; it reads DDSSVSSTSQRTEVSTVSSSQVSPA.

The protein belongs to the G-protein coupled receptor 1 family. Opsin subfamily. Post-translationally, phosphorylated on some or all of the serine and threonine residues present in the C-terminal region. As to expression, the color pigments are found in the cone photoreceptor cells.

It is found in the membrane. Functionally, visual pigments are the light-absorbing molecules that mediate vision. They consist of an apoprotein, opsin, covalently linked to cis-retinal. The protein is Violet-sensitive opsin of Xenopus laevis (African clawed frog).